Here is a 504-residue protein sequence, read N- to C-terminus: Cytochrome P450 3A1 (504 aa).

Cys443 is a heme binding site.

The protein belongs to the cytochrome P450 family. Heme is required as a cofactor.

It localises to the endoplasmic reticulum membrane. The protein resides in the microsome membrane. It carries out the reaction an organic molecule + reduced [NADPH--hemoprotein reductase] + O2 = an alcohol + oxidized [NADPH--hemoprotein reductase] + H2O + H(+). Functionally, cytochromes P450 are a group of heme-thiolate monooxygenases. In liver microsomes, this enzyme is involved in an NADPH-dependent electron transport pathway. It oxidizes a variety of structurally unrelated compounds, including steroids, fatty acids, and xenobiotics. This is Cytochrome P450 3A1 (Cyp3a1) from Rattus norvegicus (Rat).